Here is a 484-residue protein sequence, read N- to C-terminus: Glutamyl-tRNA(Gln) amidotransferase subunit A (484 aa).

Catalysis depends on charge relay system residues lysine 76 and serine 151. The active-site Acyl-ester intermediate is the serine 175.

This sequence belongs to the amidase family. GatA subfamily. In terms of assembly, heterotrimer of A, B and C subunits.

It catalyses the reaction L-glutamyl-tRNA(Gln) + L-glutamine + ATP + H2O = L-glutaminyl-tRNA(Gln) + L-glutamate + ADP + phosphate + H(+). Its function is as follows. Allows the formation of correctly charged Gln-tRNA(Gln) through the transamidation of misacylated Glu-tRNA(Gln) in organisms which lack glutaminyl-tRNA synthetase. The reaction takes place in the presence of glutamine and ATP through an activated gamma-phospho-Glu-tRNA(Gln). This Cellvibrio japonicus (strain Ueda107) (Pseudomonas fluorescens subsp. cellulosa) protein is Glutamyl-tRNA(Gln) amidotransferase subunit A.